The following is a 751-amino-acid chain: Semaphorin-3C (751 aa).

The first 21 residues, 1–21 (MAFRTICVLVGVFICSICVKG), serve as a signal peptide directing secretion. The 484-residue stretch at 28–511 (RVYLTFDELR…SNEGVSQVSL (484 aa)) folds into the Sema domain. N-linked (GlcNAc...) asparagine glycosylation occurs at N81. A disulfide bridge connects residues C101 and C112. A glycan (N-linked (GlcNAc...) asparagine) is linked at N123. A disulfide bridge connects residues C130 and C139. N252 and N268 each carry an N-linked (GlcNAc...) asparagine glycan. 2 disulfide bridges follow: C266–C378 and C290–C338. N465 carries N-linked (GlcNAc...) asparagine glycosylation. C514 and C532 are disulfide-bonded. Residues 571–655 (AYRNAAEIVQ…TENSFKQTIA (85 aa)) form the Ig-like C2-type domain. N-linked (GlcNAc...) asparagine glycosylation is found at N585 and N586. A disulfide bridge links C592 with C643. Basic and acidic residues predominate over residues 712 to 731 (TRQQHQQGDESQKMRGDYGK). Residues 712-751 (TRQQHQQGDESQKMRGDYGKLKALINSRKSRNRRNQLPES) are disordered.

This sequence belongs to the semaphorin family. In terms of assembly, interacts with PLXND1.

The protein resides in the secreted. In terms of biological role, binds to plexin family members and plays an important role in the regulation of developmental processes. Required for normal cardiovascular development during embryogenesis. Functions as attractant for growing axons, and thereby plays an important role in axon growth and axon guidance. The protein is Semaphorin-3C (SEMA3C) of Pongo abelii (Sumatran orangutan).